Reading from the N-terminus, the 113-residue chain is Large ribosomal subunit protein uL22 (113 aa).

Belongs to the universal ribosomal protein uL22 family. As to quaternary structure, part of the 50S ribosomal subunit.

This protein binds specifically to 23S rRNA; its binding is stimulated by other ribosomal proteins, e.g. L4, L17, and L20. It is important during the early stages of 50S assembly. It makes multiple contacts with different domains of the 23S rRNA in the assembled 50S subunit and ribosome. In terms of biological role, the globular domain of the protein is located near the polypeptide exit tunnel on the outside of the subunit, while an extended beta-hairpin is found that lines the wall of the exit tunnel in the center of the 70S ribosome. The protein is Large ribosomal subunit protein uL22 of Desulforamulus reducens (strain ATCC BAA-1160 / DSM 100696 / MI-1) (Desulfotomaculum reducens).